Consider the following 267-residue polypeptide: Cilia- and flagella-associated protein 300 (267 aa).

Belongs to the CFAP300 family. As to quaternary structure, interacts with DNAAF2. In terms of tissue distribution, expressed in the left-right organiser (LRO) node at 8.25 dpc.

It localises to the cytoplasm. It is found in the cytoskeleton. The protein resides in the cilium axoneme. In terms of biological role, cilium- and flagellum-specific protein that plays a role in axonemal structure organization and motility. May play a role in outer and inner dynein arm assembly. This is Cilia- and flagella-associated protein 300 from Mus musculus (Mouse).